An 82-amino-acid polypeptide reads, in one-letter code: Small ribosomal subunit protein bS18A (82 aa).

Belongs to the bacterial ribosomal protein bS18 family. As to quaternary structure, part of the 30S ribosomal subunit. Forms a tight heterodimer with protein bS6.

Binds as a heterodimer with protein bS6 to the central domain of the 16S rRNA, where it helps stabilize the platform of the 30S subunit. In Streptomyces griseus subsp. griseus (strain JCM 4626 / CBS 651.72 / NBRC 13350 / KCC S-0626 / ISP 5235), this protein is Small ribosomal subunit protein bS18A.